The chain runs to 483 residues: Probable L-xylulose kinase (483 aa).

Belongs to the FGGY kinase family. Homodimer.

It carries out the reaction L-xylulose + ATP = L-xylulose 5-phosphate + ADP + H(+). In Pasteurella multocida (strain Pm70), this protein is Probable L-xylulose kinase (lyx).